The chain runs to 453 residues: tRNA modification GTPase MnmE (453 aa).

The (6S)-5-formyl-5,6,7,8-tetrahydrofolate site is built by Arg-22, Glu-79, and Lys-119. Residues Gly-215–Gly-376 form the TrmE-type G domain. Asn-225 serves as a coordination point for K(+). GTP contacts are provided by residues Asn-225–Ser-230, Thr-244–Thr-250, Asp-269–Gly-272, and Asn-334–Asp-337. Ser-229 provides a ligand contact to Mg(2+). Residues Thr-244, Ile-246, and Thr-249 each coordinate K(+). Thr-250 is a Mg(2+) binding site. Lys-453 serves as a coordination point for (6S)-5-formyl-5,6,7,8-tetrahydrofolate.

This sequence belongs to the TRAFAC class TrmE-Era-EngA-EngB-Septin-like GTPase superfamily. TrmE GTPase family. In terms of assembly, homodimer. Heterotetramer of two MnmE and two MnmG subunits. K(+) serves as cofactor.

Its subcellular location is the cytoplasm. Functionally, exhibits a very high intrinsic GTPase hydrolysis rate. Involved in the addition of a carboxymethylaminomethyl (cmnm) group at the wobble position (U34) of certain tRNAs, forming tRNA-cmnm(5)s(2)U34. The protein is tRNA modification GTPase MnmE of Shewanella pealeana (strain ATCC 700345 / ANG-SQ1).